The following is a 485-amino-acid chain: MPIGAWSDALRNGSATAKEHSEQALERIAATEPELKAFVNVTGDQARAQAEAVDQAIAAKQDPGPLAGVTIGIKDNLCTKGVTTTCSSRMLENFVPPYESTVTERLWKAGAVMVGKTNLDEFAMGSSTETSAFGMTSNPWDPGRVPGGSSGGSAACVAAGQCDVALGSDTGGSIRQPASFCGVVGLKPTYGRVSRWGLVAFASSLDQIGPFSRTVADSAAVLQVIAGHDPRDSTSLDVPVPDYSAALNRPIQGLKIGILQEAFVEGLQPEVEASVRAAAEQLASLGCELVDVSCPRFQAGIATYYVIAPSEASANLARYDGVKYGYRAADAESLSAMTAKSRAEGFGDEVQRRILIGTYALSAGYVDAYYKKAQQVRTLIRQEFDRAFEQVDLLLTPTAPTTAFTPGEHSNDPLAMYLADLLTIPANLAGLPAISVPCGFDGQGLPIGLQLMAPVLQEERLLQVAHHYEQAADVMANRPEAPLVA.

Residues K74 and S149 each act as charge relay system in the active site. S173 acts as the Acyl-ester intermediate in catalysis.

This sequence belongs to the amidase family. GatA subfamily. In terms of assembly, heterotrimer of A, B and C subunits.

It catalyses the reaction L-glutamyl-tRNA(Gln) + L-glutamine + ATP + H2O = L-glutaminyl-tRNA(Gln) + L-glutamate + ADP + phosphate + H(+). Functionally, allows the formation of correctly charged Gln-tRNA(Gln) through the transamidation of misacylated Glu-tRNA(Gln) in organisms which lack glutaminyl-tRNA synthetase. The reaction takes place in the presence of glutamine and ATP through an activated gamma-phospho-Glu-tRNA(Gln). This chain is Glutamyl-tRNA(Gln) amidotransferase subunit A, found in Synechococcus sp. (strain RCC307).